Reading from the N-terminus, the 644-residue chain is MNDNKNNTVRNLLIGIALLSGISLTAKKFDLIGVQGSESGKNINQVNPNVISSKMTYGRFLEYLEMGWVNQVDLYDNSRNAIVQASSPELGNRPQTIRVEIPVGASQLIQKLKEYNIDFDAHPAEQKNIFVNILSNILLPIIFITGLVYLFQNSENFGGGSGQSPMSLGKSTARFERRPDTGVSFKDIAGIDEAKTEFEEIVSFLKEPDKYTIVGAKIPKGILLVGPPGTGKTLLAKAIANEADVPFFSVAGSEFVEMFIGIGAARVRDLFKKASENAPCIVFIDEIDAVGRERGAGVGGGNDEREQTLNQLLTEMDGFKENKGVIVVGATNRADILDAALLRPGRFDRQVTVNLPDRLGRVGILKVHARNKPLGEDVSLVQLANRTPGFSGADLANLLNEAAILATRYKKSSITKNEVNEAADRIIGGIAGAPMEDTKNKRLIAYHEVGHAITGSVLKSHDEVEKITLTPRGGAKGLTWFTPEEDQSLLSRSALLARIITTLGGRAAEQVIFGEPEVTTGASSDLQQVTNLARQMVTRFGMSNIGPLALEDESTGQVFLGGNMASGSEYAENIADRIDDEVRKIITYCYEKAIEIVLDNRVVIDLIVEKLLDKETMDGDEFRELLSTYTILPNKNIPYVSKFN.

The Stromal portion of the chain corresponds to 1–11; sequence MNDNKNNTVRN. Residues 12-32 form a helical membrane-spanning segment; that stretch reads LLIGIALLSGISLTAKKFDLI. Topologically, residues 33–128 are lumenal; it reads GVQGSESGKN…FDAHPAEQKN (96 aa). Residues 129-149 form a helical membrane-spanning segment; sequence IFVNILSNILLPIIFITGLVY. The Stromal segment spans residues 150 to 644; the sequence is LFQNSENFGG…KNIPYVSKFN (495 aa). Residue 226 to 233 coordinates ATP; that stretch reads GPPGTGKT. Histidine 447 serves as a coordination point for Zn(2+). Glutamate 448 is a catalytic residue. Positions 451 and 525 each coordinate Zn(2+).

It in the central section; belongs to the AAA ATPase family. The protein in the C-terminal section; belongs to the peptidase M41 family. In terms of assembly, homohexamer. Zn(2+) serves as cofactor.

The protein localises to the plastid. Its subcellular location is the chloroplast thylakoid membrane. In terms of biological role, acts as a processive, ATP-dependent zinc metallopeptidase. The sequence is that of ATP-dependent zinc metalloprotease FtsH from Trieres chinensis (Marine centric diatom).